A 76-amino-acid chain; its full sequence is Small ribosomal subunit protein bS16c (76 aa).

The protein belongs to the bacterial ribosomal protein bS16 family.

It localises to the plastid. The protein resides in the chloroplast. In Guillardia theta (Cryptophyte), this protein is Small ribosomal subunit protein bS16c.